The chain runs to 404 residues: Cysteine desulfurase IscS (404 aa).

Pyridoxal 5'-phosphate contacts are provided by residues 75–76 (AT), Asn-155, Gln-183, and 203–205 (SSH). Residue Lys-206 is modified to N6-(pyridoxal phosphate)lysine. Residue Thr-243 coordinates pyridoxal 5'-phosphate. Catalysis depends on Cys-328, which acts as the Cysteine persulfide intermediate. Residue Cys-328 participates in [2Fe-2S] cluster binding.

This sequence belongs to the class-V pyridoxal-phosphate-dependent aminotransferase family. NifS/IscS subfamily. As to quaternary structure, homodimer. Forms a heterotetramer with IscU, interacts with other sulfur acceptors. Requires pyridoxal 5'-phosphate as cofactor.

The protein resides in the cytoplasm. The catalysed reaction is (sulfur carrier)-H + L-cysteine = (sulfur carrier)-SH + L-alanine. It functions in the pathway cofactor biosynthesis; iron-sulfur cluster biosynthesis. Master enzyme that delivers sulfur to a number of partners involved in Fe-S cluster assembly, tRNA modification or cofactor biosynthesis. Catalyzes the removal of elemental sulfur atoms from cysteine to produce alanine. Functions as a sulfur delivery protein for Fe-S cluster synthesis onto IscU, an Fe-S scaffold assembly protein, as well as other S acceptor proteins. In Histophilus somni (strain 129Pt) (Haemophilus somnus), this protein is Cysteine desulfurase IscS.